A 409-amino-acid polypeptide reads, in one-letter code: Aspartate aminotransferase, cytoplasmic (409 aa).

N-acetylserine is present on Ser2. Residues Gly38, Trp138, and Asn191 each coordinate L-aspartate. At Lys255 the chain carries N6-(pyridoxal phosphate)lysine. Arg383 is an L-aspartate binding site. Ser385 is modified (phosphoserine).

This sequence belongs to the class-I pyridoxal-phosphate-dependent aminotransferase family. As to quaternary structure, homodimer. It depends on pyridoxal 5'-phosphate as a cofactor.

Its subcellular location is the cytoplasm. The catalysed reaction is L-aspartate + 2-oxoglutarate = oxaloacetate + L-glutamate. Plays a key role in amino acid metabolism. In Schizosaccharomyces pombe (strain 972 / ATCC 24843) (Fission yeast), this protein is Aspartate aminotransferase, cytoplasmic.